Reading from the N-terminus, the 238-residue chain is tRNA (guanine-N(7)-)-methyltransferase (238 aa).

S-adenosyl-L-methionine is bound by residues E68, E93, D120, and D143. Residue D143 is part of the active site. Substrate-binding positions include K147, D179, and 216–219 (TKFE).

This sequence belongs to the class I-like SAM-binding methyltransferase superfamily. TrmB family.

It carries out the reaction guanosine(46) in tRNA + S-adenosyl-L-methionine = N(7)-methylguanosine(46) in tRNA + S-adenosyl-L-homocysteine. It functions in the pathway tRNA modification; N(7)-methylguanine-tRNA biosynthesis. Catalyzes the formation of N(7)-methylguanine at position 46 (m7G46) in tRNA. This is tRNA (guanine-N(7)-)-methyltransferase from Shewanella frigidimarina (strain NCIMB 400).